Here is a 443-residue protein sequence, read N- to C-terminus: uncharacterized protein (443 aa).

4 helical membrane-spanning segments follow: residues 15-35 (IYAGAGPAPMLAAAVAWDGLA), 38-58 (LGMAAASFSLLISGLTAGPGS), 59-79 (AWQGPAAAAMAAAAAPYLSWL), and 181-201 (VVTAAPAGAVGVPAALAIPAL). The tract at residues 231–270 (NFGIGNIGNANLGNGNIGNANLGSGNAGFFNFGNGNDGNT) is 4 X 10 AA approximate repeats.

This sequence belongs to the mycobacterial PPE family.

It localises to the cell membrane. This is an uncharacterized protein from Mycobacterium tuberculosis (strain ATCC 25618 / H37Rv).